The sequence spans 276 residues: Glutamate racemase (276 aa).

Substrate contacts are provided by residues 12–13 (DS) and 44–45 (YG). Residue Cys-76 is the Proton donor/acceptor of the active site. Position 77–78 (77–78 (NT)) interacts with substrate. Cys-187 serves as the catalytic Proton donor/acceptor. 188–189 (TH) lines the substrate pocket.

The protein belongs to the aspartate/glutamate racemases family.

The enzyme catalyses L-glutamate = D-glutamate. It participates in cell wall biogenesis; peptidoglycan biosynthesis. Its function is as follows. Provides the (R)-glutamate required for cell wall biosynthesis. This is Glutamate racemase from Granulibacter bethesdensis (strain ATCC BAA-1260 / CGDNIH1).